The sequence spans 336 residues: Acyl-CoA-binding domain-containing protein 4 (336 aa).

A helical; Signal-anchor transmembrane segment spans residues 12–32 (AVIGLLFAFLVAKLISTVIAF). Residues 40-88 (TRSTPTSPSAADTPAAPAPPPASLDGGHGDTSDGSGSDSDSDWEGVEST) form a disordered region. Low complexity predominate over residues 42 to 54 (STPTSPSAADTPA). The segment covering 78-88 (SDSDWEGVEST) has biased composition (acidic residues). The ACB domain maps to 90–178 (LDEEFSAASA…VDELFPNWSM (89 aa)). Residues 120 to 124 (YGLYK), K142, K146, and Y165 each bind an acyl-CoA. An N-linked (GlcNAc...) asparagine glycan is attached at N175. Positions 179–202 (GSSTKRKDEDTTVSASSSKGPMGP) are disordered. Residue N216 is glycosylated (N-linked (GlcNAc...) asparagine). ANK repeat units lie at residues 251–280 (EGRT…DVNA) and 284–313 (EGQT…DVQI).

It belongs to the ACBP family. Highly expressed in leaves. Expressed at low levels in roots and seeds.

Its subcellular location is the endoplasmic reticulum membrane. Binds medium- and long-chain acyl-CoA esters with high affinity. Can interact in vitro with palmitoyl-CoA, linoleoyl-CoA and linolenoyl-CoA. Binds phosphatidic acid (PA) and phosphatidylcholine (PC) in vitro. May play a role in the biosynthesis of phospholipids. The sequence is that of Acyl-CoA-binding domain-containing protein 4 from Oryza sativa subsp. japonica (Rice).